The following is a 92-amino-acid chain: Small ribosomal subunit protein uS19 (92 aa).

The protein belongs to the universal ribosomal protein uS19 family.

Functionally, protein S19 forms a complex with S13 that binds strongly to the 16S ribosomal RNA. In Rickettsia bellii (strain OSU 85-389), this protein is Small ribosomal subunit protein uS19.